Consider the following 574-residue polypeptide: Proline--tRNA ligase (574 aa).

Belongs to the class-II aminoacyl-tRNA synthetase family. ProS type 1 subfamily. In terms of assembly, homodimer.

It localises to the cytoplasm. The catalysed reaction is tRNA(Pro) + L-proline + ATP = L-prolyl-tRNA(Pro) + AMP + diphosphate. Functionally, catalyzes the attachment of proline to tRNA(Pro) in a two-step reaction: proline is first activated by ATP to form Pro-AMP and then transferred to the acceptor end of tRNA(Pro). As ProRS can inadvertently accommodate and process non-cognate amino acids such as alanine and cysteine, to avoid such errors it has two additional distinct editing activities against alanine. One activity is designated as 'pretransfer' editing and involves the tRNA(Pro)-independent hydrolysis of activated Ala-AMP. The other activity is designated 'posttransfer' editing and involves deacylation of mischarged Ala-tRNA(Pro). The misacylated Cys-tRNA(Pro) is not edited by ProRS. The chain is Proline--tRNA ligase from Sodalis glossinidius (strain morsitans).